We begin with the raw amino-acid sequence, 53 residues long: Conotoxin Cal6.27 (53 aa).

Residues 1–24 form the signal peptide; sequence MKLTCVLIAAMLLLAVCQLDSADA. 3 cysteine pairs are disulfide-bonded: Cys29-Cys43, Cys36-Cys47, and Cys42-Cys51.

It belongs to the conotoxin O1 superfamily. As to expression, expressed by the venom duct.

It is found in the secreted. In terms of biological role, probable neurotoxin. The chain is Conotoxin Cal6.27 from Californiconus californicus (California cone).